Consider the following 125-residue polypeptide: UPF0738 protein GK0828 (125 aa).

It belongs to the UPF0738 family.

The polypeptide is UPF0738 protein GK0828 (Geobacillus kaustophilus (strain HTA426)).